Here is a 117-residue protein sequence, read N- to C-terminus: uncharacterized protein (117 aa).

This is an uncharacterized protein from Bacillus subtilis (strain 168).